Consider the following 494-residue polypeptide: UPF0371 protein Sez_1293 (494 aa).

The protein belongs to the UPF0371 family.

The polypeptide is UPF0371 protein Sez_1293 (Streptococcus equi subsp. zooepidemicus (strain MGCS10565)).